We begin with the raw amino-acid sequence, 293 residues long: N(1)-aminopropylagmatine ureohydrolase (293 aa).

Mn(2+) contacts are provided by His-105, Asp-128, His-130, Asp-132, Asp-210, and Asp-212.

Belongs to the arginase family. The cofactor is Mn(2+).

The catalysed reaction is N(1)-(3-aminopropyl)agmatine + H2O = urea + spermidine. It functions in the pathway amine and polyamine biosynthesis; spermidine biosynthesis. In terms of biological role, involved in the biosynthesis of polyamines which are thought to support the growth of thermophilic microorganisms under high-temperature conditions. It seems that long-chain and branched-chain of polyamines effectively stabilize DNA and RNA, respectively. Catalyzes the decarboxylation of N1-(3-aminopropyl)agmatine to yield spermidine and urea. Does not act on agmatine. This Thermus thermophilus (strain ATCC BAA-163 / DSM 7039 / HB27) protein is N(1)-aminopropylagmatine ureohydrolase.